The sequence spans 78 residues: Antimicrobial peptide marcin-18 (78 aa).

A signal peptide spans 1–23; that stretch reads MQFKKQLMVIFLAYFLVVNESEA. An Arginine amide modification is found at R41. The propeptide occupies 42–78; it reads RKNQRSRSIMKRDLENLFDPYQRNLELDRLLKQLPNY.

This sequence belongs to the non-disulfide-bridged peptide (NDBP) superfamily. Medium-length antimicrobial peptide (group 3) family. In terms of tissue distribution, expressed by the venom gland.

It localises to the secreted. The protein resides in the target cell membrane. Antimicrobial peptide with potent activity against bacteria. Acts by fastly disrupting the bacterial membrane. Shows activity against Gram-positive bacteria S.aureus (MIC=1.5-2.9 uM) and S.epidermidis (MIC=2.9 uM), M.luteus (MIC=23.4 uM), B.thuringiensis (MIC=2.9 uM), B.subtilis (MIC=2.9 uM) and Gram-negative bacteria E.coli (MIC=5.9-11.7 uM) and P.aeruginosa (MIC=5.9 uM), as well as against penicillin (MIC=2.9 uM) and methicillin (MIC=1.5-2.9 uM) resistant bacteria. Antibiotic activity is not affected by major negatively charged components of the prokaryotic cell wall (e.g. lipopolysaccharides and lipoteichoic acid). In vivo, in a mouse model of lethal peritonitis, shows potent antibiotic activity without cytotoxicity, improving the survival rate. The protein is Antimicrobial peptide marcin-18 of Olivierus martensii (Manchurian scorpion).